A 245-amino-acid polypeptide reads, in one-letter code: Protein canopy homolog 4 (245 aa).

Residues 1–27 form the signal peptide; it reads MCGLRFIMGPVRLEILLFILAAYGAWA. 3 disulfide bridges follow: Cys-44–Cys-202, Cys-47–Cys-190, and Cys-100–Cys-162. Residues 207-245 are disordered; sequence WTGKEKISDGQEEADDEEEEEEEEITKTSGNPKHDPEDL. The stretch at 209–237 forms a coiled coil; the sequence is GKEKISDGQEEADDEEEEEEEEITKTSGN. The span at 216–230 shows a compositional bias: acidic residues; it reads GQEEADDEEEEEEEE.

Belongs to the canopy family. As to quaternary structure, interacts with TLR4. Highly expressed in lung, spleen, thymus, and uterus. Moderately expressed in kidney, stomach and placenta. Weakly expressed in brain, heart, liver, small intestine, skeletal muscle and testis.

It localises to the secreted. Functionally, plays a role in the regulation of the cell surface expression of TLR4. This Mus musculus (Mouse) protein is Protein canopy homolog 4 (Cnpy4).